The following is a 612-amino-acid chain: Proline-rich protein 14 (612 aa).

Met1 carries the post-translational modification N-acetylmethionine. Polar residues-rich tracts occupy residues 1 to 15 and 86 to 96; these read MDLP…QPSL and VCTQSPALPSQ. Disordered stretches follow at residues 1–48, 65–96, 119–150, and 206–256; these read MDLP…EKAS, VPLT…LPSQ, RARQ…QVPQ, and PTLT…PALE. Residues 1 to 135 are sufficient for heterochromatin association in interphase and chromatin association in anaphase; it reads MDLPGNSSPF…ALRMRSRAAS (135 aa). The required for the interaction with GRB2 and sufficient to promote the phosphorylation of AKT and cell proliferation stretch occupies residues 85 to 405; the sequence is PVCTQSPALP…MARTPPPPRP (321 aa). Residues 136–392 are required for nuclear lamina association; it reads GPEESPSKKT…QSRPRRHTVG (257 aa). Pro residues predominate over residues 243-252; that stretch reads ADPPESPVPD. Position 307 is a phosphoserine (Ser307). Disordered regions lie at residues 323–405, 444–463, and 553–583; these read QSRA…PPRP, LGST…FSDP, and DSSL…PSQD. A compositionally biased stretch (polar residues) spans 342–359; the sequence is WRTQCNSLAPVSKSSLGR. Residues 366-379 show a composition bias toward pro residues; the sequence is LGPPDPGSWPPVPS. Positions 448-463 are enriched in basic and acidic residues; it reads KGKELRASKDKVFSDP. The interval 546 to 563 is required for nuclear localization; it reads RRAVEFRDSSLPRSRRPS. A compositionally biased stretch (polar residues) spans 570-583; it reads ASRTLTPNLAPSQD.

In terms of assembly, interacts (via proline-rich region) with GRB2 (via SH3 domain 2). Interacts (via N-terminus) with CBX5.

It is found in the chromosome. The protein localises to the nucleus. Its subcellular location is the nucleus lamina. The protein resides in the nucleoplasm. In terms of biological role, functions in tethering peripheral heterochromatin to the nuclear lamina during interphase, possibly through the interaction with heterochromatin protein CBX5/HP1 alpha. Might play a role in reattaching heterochromatin to the nuclear lamina at mitotic exit. Promotes myoblast differentiation during skeletal myogenesis, possibly by stimulating transcription factor MyoD activity via binding to CBX5/HP1 alpha. Involved in the positive regulation of the PI3K-Akt-mTOR signaling pathway and in promoting cell proliferation, possibly via binding to GRB2. The protein is Proline-rich protein 14 (Prr14) of Mus musculus (Mouse).